The following is a 224-amino-acid chain: Putative adhesin A1G_07050 (224 aa).

The first 22 residues, 1–22, serve as a signal peptide directing secretion; that stretch reads MKKLLLIAATSATILSSSVSFA.

This is Putative adhesin A1G_07050 from Rickettsia rickettsii (strain Sheila Smith).